The chain runs to 624 residues: ERAD-associated E3 ubiquitin-protein ligase ASI1 (624 aa).

Topologically, residues 1 to 69 are perinuclear space; the sequence is MNSSTSSENV…SEEIPPTLRS (69 aa). N-linked (GlcNAc...) asparagine glycans are attached at residues asparagine 2, asparagine 19, and asparagine 29. Residues 70 to 90 traverse the membrane as a helical segment; it reads VFDTIGFFFSPYAIFCFVIAI. Residues 91-116 are Nuclear-facing; it reads VLNRFVVFYAVLNNGSRRTLPLWLSN. A helical membrane pass occupies residues 117–137; that stretch reads VFHVSAVVVLAMVSLGPLTLG. At 138–152 the chain is on the perinuclear space side; sequence KDFKILGDPAFAQEK. A helical membrane pass occupies residues 153–173; the sequence is FLLNIFYAFAYSYCVETIFTI. Over 174–209 the chain is Nuclear; that stretch reads MRNSSPLEGTDYSLFELSIQFYTMTNNNTKFLDSPD. A helical membrane pass occupies residues 210-230; that stretch reads YIIDCSMAILSRILIHLVEIF. The Perinuclear space segment spans residues 231–273; the sequence is RLRNYRLLFSTIMNLCHICYLGIRVKQGGWKSLPFSVKFRHFP. Residues 274–294 form a helical membrane-spanning segment; it reads KLFSVSIICLSLLIFKLSCLI. Residues 295–624 lie on the Nuclear side of the membrane; it reads RWDPFGKSRN…CKVHPVSDSK (330 aa). Positions 467-490 are disordered; sequence TSDDEYSEDYEPSEVESLGDSDEE. Over residues 468-490 the composition is skewed to acidic residues; it reads SDDEYSEDYEPSEVESLGDSDEE. The RING-type; atypical zinc-finger motif lies at 568 to 608; the sequence is CAVCKVNERNTVLWPCRCFAICEDCRISLGLRGFSTCVCCR.

In terms of assembly, component of the Asi complex, which contains ASI1, ASI2 and ASI3. Interacts directly with ASI3. Glycosylation is not required for ASI1 function.

The protein resides in the nucleus inner membrane. It carries out the reaction S-ubiquitinyl-[E2 ubiquitin-conjugating enzyme]-L-cysteine + [acceptor protein]-L-lysine = [E2 ubiquitin-conjugating enzyme]-L-cysteine + N(6)-ubiquitinyl-[acceptor protein]-L-lysine.. E3 ubiquitin-protein ligase which transfers ubiquitin to substrates promoting their degradation. Part of the nuclear inner membrane (INM)-specific branch of the ER-associated degradation (ERAD) pathway, required for the elimination of misfolded proteins in the INM, a specialized ER subdomain. Required for ERG11 degradation. Negative regulator of SPS-sensor signaling. Together with ASI2 and ASI3, prevents the unprocessed precursor forms of STP1 and STP2 that escape cytoplasmic anchoring from inducing SPS-sensor-regulated genes in the absence of inducing signals. Controls amino acid permease (AAP) gene expression in response to amino acid availability, a process mediated by the transcription factors STP1 and STP1. This chain is ERAD-associated E3 ubiquitin-protein ligase ASI1 (ASI1), found in Saccharomyces cerevisiae (strain ATCC 204508 / S288c) (Baker's yeast).